We begin with the raw amino-acid sequence, 224 residues long: uncharacterized protein (224 aa).

A disordered region spans residues 203-224 (ELKKKKKKKIKKPKEIRNQKNV). A compositionally biased stretch (basic residues) spans 204–214 (LKKKKKKKIKK). The span at 215-224 (PKEIRNQKNV) shows a compositional bias: basic and acidic residues.

This is an uncharacterized protein from Mycoplasma genitalium (strain ATCC 33530 / DSM 19775 / NCTC 10195 / G37) (Mycoplasmoides genitalium).